A 65-amino-acid polypeptide reads, in one-letter code: Beta-defensin 106A (65 aa).

A signal peptide spans 1–20; sequence MRTFLFLFVVLFFLTPAKNA. 3 disulfide bridges follow: cysteine 26–cysteine 53, cysteine 33–cysteine 47, and cysteine 37–cysteine 54.

This sequence belongs to the beta-defensin family. Monomer. Interacts with CCR2 (via extracellular N-terminal region); this interaction may preferentially require specific tyrosine sulfation on CCR2.

It is found in the secreted. The protein resides in the membrane. Its function is as follows. Has antibacterial activity. Acts as a ligand for C-C chemokine receptor CCR2. In Hylobates lar (Lar gibbon), this protein is Beta-defensin 106A (DEFB106A).